The sequence spans 213 residues: Pyrrolidone-carboxylate peptidase (213 aa).

Residues glutamate 78, cysteine 141, and histidine 165 contribute to the active site.

This sequence belongs to the peptidase C15 family. Homotetramer.

It localises to the cytoplasm. The catalysed reaction is Release of an N-terminal pyroglutamyl group from a polypeptide, the second amino acid generally not being Pro.. In terms of biological role, removes 5-oxoproline from various penultimate amino acid residues except L-proline. The polypeptide is Pyrrolidone-carboxylate peptidase (Clostridium perfringens (strain SM101 / Type A)).